The sequence spans 865 residues: Outer membrane usher protein HtrE (865 aa).

The signal sequence occupies residues 1–29; it reads MTIEYTKNYHHLTRIATFCALLYCNTAFS. A disulfide bond links C838 and C862.

It belongs to the fimbrial export usher family.

Its subcellular location is the cell outer membrane. In terms of biological role, part of the yadCKLM-htrE-yadVN fimbrial operon. Could contribute to adhesion to various surfaces in specific environmental niches. Probably involved in the export and assembly of fimbrial subunits across the outer membrane. The sequence is that of Outer membrane usher protein HtrE (htrE) from Escherichia coli (strain K12).